We begin with the raw amino-acid sequence, 675 residues long: Electrogenic aspartate/glutamate antiporter SLC25A13, mitochondrial (675 aa).

An N-acetylalanine modification is found at Ala2. Positions 2–295 (AAAKVALTKR…TLADIERIAP (294 aa)) are regulatory N-terminal domain. The Mitochondrial intermembrane portion of the chain corresponds to 2–331 (AAAKVALTKR…LLQVAESAYR (330 aa)). EF-hand domains are found at residues 51-86 (SQPN…SVLC), 87-122 (APDA…TTIH), 125-157 (IPFN…FLLE), and 158-193 (IQLE…IRPH). Residues Asp66, Thr68, Asp70, Leu72, and Glu77 each coordinate Ca(2+). The tract at residues 296-311 (LEEGTLPFNLAEAQRQ) is linker loop domain. Positions 321 to 612 (VLLQVAESAY…LQRWFYIDFG (292 aa)) are carrier domain. 3 Solcar repeats span residues 326 to 418 (AESA…VRDK), 426 to 510 (VPLA…VKAS), and 518 to 606 (VSPG…LQRW). Residues 332-349 (FGLGSVAGAVGATAVYPI) traverse the membrane as a helical segment. Topologically, residues 350–392 (DLVKTRMQNQRSTGSFVGELMYKNSFDCFKKVLRYEGFFGLYR) are mitochondrial matrix. 2 positions are modified to N6-acetyllysine: Lys353 and Lys372. The helical transmembrane segment at 393 to 412 (GLLPQLLGVAPEKAIKLTVN) threads the bilayer. Over 413 to 435 (DFVRDKFMHKDGSVPLAAEILAG) the chain is Mitochondrial intermembrane. A helical transmembrane segment spans residues 436–449 (GCAGGSQVIFTNPL). The Mitochondrial matrix segment spans residues 450 to 484 (EIVKIRLQVAGEITTGPRVSALSVVRDLGFFGIYK). An N6-methyllysine modification is found at Lys453. Lys484 carries the post-translational modification N6-acetyllysine; alternate. N6-succinyllysine; alternate is present on Lys484. A helical transmembrane segment spans residues 485–504 (GAKACFLRDIPFSAIYFPCY). Residues 505–523 (AHVKASFANEDGQVSPGSL) lie on the Mitochondrial intermembrane side of the membrane. A helical transmembrane segment spans residues 524-541 (LLAGAIAGMPAASLVTPA). Residues 542–580 (DVIKTRLQVAARAGQTTYSGVIDCFRKILREEGPKALWK) lie on the Mitochondrial matrix side of the membrane. Lys580 is modified (N6-succinyllysine). Residues 581–600 (GAGARVFRSSPQFGVTLLTY) traverse the membrane as a helical segment. Residues 601–675 (ELLQRWFYID…STSKAIGGGP (75 aa)) lie on the Mitochondrial intermembrane side of the membrane. A C-terminal domain region spans residues 613–675 (GVKPMGSEPV…STSKAIGGGP (63 aa)). The residue at position 662 (Lys662) is an N6-acetyllysine. The residue at position 666 (Ser666) is a Phosphoserine.

Belongs to the mitochondrial carrier (TC 2.A.29) family. Homodimer (via N-terminus). In terms of tissue distribution, high levels in liver and low levels in kidney, pancreas, placenta, heart and brain.

Its subcellular location is the mitochondrion inner membrane. The enzyme catalyses L-aspartate(in) + L-glutamate(out) + H(+)(out) = L-aspartate(out) + L-glutamate(in) + H(+)(in). It carries out the reaction 3-sulfino-L-alanine(out) + L-glutamate(in) + H(+)(in) = 3-sulfino-L-alanine(in) + L-glutamate(out) + H(+)(out). It catalyses the reaction 3-sulfino-L-alanine(out) + L-aspartate(in) = 3-sulfino-L-alanine(in) + L-aspartate(out). Activated by calcium-binding in the mitochondrial intermembrane space. Inhibited by pyridoxal 5'-phosphate, bathophenathroline, mercurials, diethyl pyrocarbonate and N-ethylmaleimide. In terms of biological role, mitochondrial electrogenic aspartate/glutamate antiporter that favors efflux of aspartate and entry of glutamate and proton within the mitochondria as part of the malate-aspartate shuttle. Also mediates the uptake of L-cysteinesulfinate (3-sulfino-L-alanine) by mitochondria in exchange of L-glutamate and proton. Can also exchange L-cysteinesulfinate with aspartate in their anionic form without any proton translocation. Lacks transport activity towards gamma-aminobutyric acid (GABA). The polypeptide is Electrogenic aspartate/glutamate antiporter SLC25A13, mitochondrial (Homo sapiens (Human)).